The sequence spans 447 residues: GTPase Der (447 aa).

EngA-type G domains follow at residues 2 to 166 (YRVA…PEYE) and 183 to 358 (IKVA…NQSW). GTP contacts are provided by residues 8-15 (GRPNVGKS), 55-59 (DTGGY), 118-121 (NKID), 189-196 (GKPNAGKS), 236-240 (DTAGL), and 301-304 (NKID). The 85-residue stretch at 359-443 (KRVGTGQLNR…PIKLLLRGKE (85 aa)) folds into the KH-like domain.

This sequence belongs to the TRAFAC class TrmE-Era-EngA-EngB-Septin-like GTPase superfamily. EngA (Der) GTPase family. In terms of assembly, associates with the 50S ribosomal subunit.

GTPase that plays an essential role in the late steps of ribosome biogenesis. This Persephonella marina (strain DSM 14350 / EX-H1) protein is GTPase Der.